We begin with the raw amino-acid sequence, 116 residues long: Aspartate 1-decarboxylase (116 aa).

Catalysis depends on Ser25, which acts as the Schiff-base intermediate with substrate; via pyruvic acid. Pyruvic acid (Ser) is present on Ser25. Residue Thr57 participates in substrate binding. Tyr58 functions as the Proton donor in the catalytic mechanism. Position 73–75 (73–75 (GAA)) interacts with substrate.

This sequence belongs to the PanD family. Heterooctamer of four alpha and four beta subunits. Requires pyruvate as cofactor. Post-translationally, is synthesized initially as an inactive proenzyme, which is activated by self-cleavage at a specific serine bond to produce a beta-subunit with a hydroxyl group at its C-terminus and an alpha-subunit with a pyruvoyl group at its N-terminus.

The protein localises to the cytoplasm. It carries out the reaction L-aspartate + H(+) = beta-alanine + CO2. It functions in the pathway cofactor biosynthesis; (R)-pantothenate biosynthesis; beta-alanine from L-aspartate: step 1/1. Its function is as follows. Catalyzes the pyruvoyl-dependent decarboxylation of aspartate to produce beta-alanine. The sequence is that of Aspartate 1-decarboxylase from Christiangramia forsetii (strain DSM 17595 / CGMCC 1.15422 / KT0803) (Gramella forsetii).